Here is a 340-residue protein sequence, read N- to C-terminus: Aldo-keto reductase yakc [NADP(+)] (340 aa).

The active-site Proton donor is tyrosine 56. Histidine 126 lines the substrate pocket. Residue 208–218 coordinates NADP(+); the sequence is APLGRGFLTGA.

The protein belongs to the aldo/keto reductase family. Aldo/keto reductase 2 subfamily. As to quaternary structure, monomer.

The polypeptide is Aldo-keto reductase yakc [NADP(+)] (yakc) (Schizosaccharomyces pombe (strain 972 / ATCC 24843) (Fission yeast)).